A 486-amino-acid polypeptide reads, in one-letter code: Probable glucan endo-1,3-beta-glucosidase eglC (486 aa).

Residues 1 to 18 (MQLTQLLALALSLATSEA) form the signal peptide. N-linked (GlcNAc...) asparagine glycosylation is present at Asn-84. Glu-128 functions as the Proton donor in the catalytic mechanism. Asn-183 is a glycosylation site (N-linked (GlcNAc...) asparagine). Glu-239 (nucleophile) is an active-site residue. 4 N-linked (GlcNAc...) asparagine glycosylation sites follow: Asn-315, Asn-386, Asn-396, and Asn-404. The tract at residues 330–458 (AAAGGVAGGS…SSGAASPSST (129 aa)) is disordered. Composition is skewed to low complexity over residues 341 to 404 (GSAS…HGSN) and 413 to 424 (SVSNVSPSKSSS). The span at 430–442 (AATSMGASPSSVG) shows a compositional bias: polar residues. A compositionally biased stretch (low complexity) spans 445-458 (GPSKSSGAASPSST). A lipid anchor (GPI-anchor amidated glycine) is attached at Gly-463. The propeptide at 464–486 (AATSVSAPVVHVVLLALMMVIAA) is removed in mature form.

The protein belongs to the glycosyl hydrolase 17 family. In terms of processing, the GPI-anchor is attached to the protein in the endoplasmic reticulum and serves to target the protein to the cell surface. There, the glucosamine-inositol phospholipid moiety is cleaved off and the GPI-modified mannoprotein is covalently attached via its lipidless GPI glycan remnant to the 1,6-beta-glucan of the outer cell wall layer.

It is found in the cell membrane. The protein resides in the secreted. The protein localises to the cell wall. It carries out the reaction Hydrolysis of (1-&gt;3)-beta-D-glucosidic linkages in (1-&gt;3)-beta-D-glucans.. Glucanases play a role in cell expansion during growth, in cell-cell fusion during mating, and in spore release during sporulation. This enzyme may be involved in beta-glucan degradation and also function biosynthetically as a transglycosylase. In Aspergillus terreus (strain NIH 2624 / FGSC A1156), this protein is Probable glucan endo-1,3-beta-glucosidase eglC (eglC).